Here is a 425-residue protein sequence, read N- to C-terminus: Enolase (425 aa).

The interval 31–54 (TGSAIVPSGASTGEKEAVELRDSD) is disordered. The segment covering 43-54 (GEKEAVELRDSD) has biased composition (basic and acidic residues). A (2R)-2-phosphoglycerate-binding site is contributed by Gln-162. Residue Glu-204 is the Proton donor of the active site. Positions 241, 285, and 312 each coordinate Mg(2+). Lys-337, Arg-366, Ser-367, and Lys-388 together coordinate (2R)-2-phosphoglycerate. The active-site Proton acceptor is the Lys-337.

Belongs to the enolase family. The cofactor is Mg(2+).

It is found in the cytoplasm. It localises to the secreted. The protein localises to the cell surface. It catalyses the reaction (2R)-2-phosphoglycerate = phosphoenolpyruvate + H2O. The protein operates within carbohydrate degradation; glycolysis; pyruvate from D-glyceraldehyde 3-phosphate: step 4/5. In terms of biological role, catalyzes the reversible conversion of 2-phosphoglycerate (2-PG) into phosphoenolpyruvate (PEP). It is essential for the degradation of carbohydrates via glycolysis. The chain is Enolase from Gloeobacter violaceus (strain ATCC 29082 / PCC 7421).